We begin with the raw amino-acid sequence, 577 residues long: Zinc finger-containing ubiquitin peptidase 1 (577 aa).

The C2H2-type 1 zinc finger occupies 2-24; it reads LSCNICGETVNSEPDMKAHLIVH. The C2H2-type 2; atypical zinc finger occupies 29–52; it reads IICPFCKLSGINYNEICFHIETVH. Over residues 124–137 the composition is skewed to basic and acidic residues; the sequence is ESRKYQKSREKKPG. The segment at 124–145 is disordered; sequence ESRKYQKSREKKPGLSEAQGSI. The segment at 153–176 adopts a C2H2-type 3; atypical zinc-finger fold; the sequence is PECPFCGKIEGCSQDMEIHVKTKH. The C2H2-type 4 zinc finger occupies 192–214; sequence YDCPMCGLVCTNYHILQEHVDLH. Residues 225-247 are MIU; the sequence is DRVQCSSDRELAHRLQQEEDRKR. Positions 238–260 are disordered; it reads RLQQEEDRKRKSEESRQEREEFQ. The zUBD/ZHA stretch occupies residues 248–273; sequence KSEESRQEREEFQKLQRQYGLDNSGG. At Lys-261 the chain carries N6-acetyllysine. The Nucleophile role is filled by Cys-359. His-490 acts as the Proton acceptor in catalysis. The active site involves Asp-511.

It belongs to the peptidase C78 family. ZUFSP subfamily. As to quaternary structure, interacts with RPA1 and RPA2.

Its subcellular location is the cytoplasm. The protein resides in the nucleus. It catalyses the reaction Thiol-dependent hydrolysis of ester, thioester, amide, peptide and isopeptide bonds formed by the C-terminal Gly of ubiquitin (a 76-residue protein attached to proteins as an intracellular targeting signal).. Its function is as follows. Deubiquitinase with endodeubiquitinase activity that specifically interacts with and cleaves 'Lys-63'-linked long polyubiquitin chains. Shows only weak activity against 'Lys-11' and 'Lys-48'-linked chains. Plays an important role in genome stability pathways, functioning to prevent spontaneous DNA damage and also promote cellular survival in response to exogenous DNA damage. Modulates the ubiquitination status of replication protein A (RPA) complex proteins in response to replication stress. The sequence is that of Zinc finger-containing ubiquitin peptidase 1 from Mus musculus (Mouse).